The sequence spans 417 residues: UDP-N-acetylmuramoylalanine--D-glutamate ligase (417 aa).

Position 108 to 114 (108 to 114 (GSNGKTT)) interacts with ATP.

It belongs to the MurCDEF family.

It localises to the cytoplasm. The enzyme catalyses UDP-N-acetyl-alpha-D-muramoyl-L-alanine + D-glutamate + ATP = UDP-N-acetyl-alpha-D-muramoyl-L-alanyl-D-glutamate + ADP + phosphate + H(+). It participates in cell wall biogenesis; peptidoglycan biosynthesis. Its function is as follows. Cell wall formation. Catalyzes the addition of glutamate to the nucleotide precursor UDP-N-acetylmuramoyl-L-alanine (UMA). This Chlamydia pneumoniae (Chlamydophila pneumoniae) protein is UDP-N-acetylmuramoylalanine--D-glutamate ligase.